The primary structure comprises 201 residues: Pyridoxal 5'-phosphate synthase subunit PdxT (201 aa).

50 to 52 (GES) serves as a coordination point for L-glutamine. Cysteine 82 serves as the catalytic Nucleophile. L-glutamine contacts are provided by residues arginine 115 and 143-144 (IR). Active-site charge relay system residues include histidine 179 and glutamate 181.

The protein belongs to the glutaminase PdxT/SNO family. In the presence of PdxS, forms a dodecamer of heterodimers. Only shows activity in the heterodimer.

It catalyses the reaction aldehydo-D-ribose 5-phosphate + D-glyceraldehyde 3-phosphate + L-glutamine = pyridoxal 5'-phosphate + L-glutamate + phosphate + 3 H2O + H(+). The enzyme catalyses L-glutamine + H2O = L-glutamate + NH4(+). Its pathway is cofactor biosynthesis; pyridoxal 5'-phosphate biosynthesis. In terms of biological role, catalyzes the hydrolysis of glutamine to glutamate and ammonia as part of the biosynthesis of pyridoxal 5'-phosphate. The resulting ammonia molecule is channeled to the active site of PdxS. The chain is Pyridoxal 5'-phosphate synthase subunit PdxT from Deinococcus geothermalis (strain DSM 11300 / CIP 105573 / AG-3a).